Reading from the N-terminus, the 500-residue chain is Ribose import ATP-binding protein RbsA (500 aa).

ABC transporter domains are found at residues 6–242 and 252–495; these read LALS…VGRK and AQQG…VGRN. 38-45 is an ATP binding site; that stretch reads GENGAGKS.

It belongs to the ABC transporter superfamily. Ribose importer (TC 3.A.1.2.1) family. In terms of assembly, the complex is composed of an ATP-binding protein (RbsA), two transmembrane proteins (RbsC) and a solute-binding protein (RbsB).

The protein localises to the cell inner membrane. The enzyme catalyses D-ribose(out) + ATP + H2O = D-ribose(in) + ADP + phosphate + H(+). In terms of biological role, part of the ABC transporter complex RbsABC involved in ribose import. Responsible for energy coupling to the transport system. The sequence is that of Ribose import ATP-binding protein RbsA from Vibrio cholerae serotype O1 (strain ATCC 39315 / El Tor Inaba N16961).